The primary structure comprises 117 residues: Hydrogenase maturation factor HypA (117 aa).

His-2 is a Ni(2+) binding site. Residues Cys-73, Cys-76, Cys-89, and Cys-92 each contribute to the Zn(2+) site.

The protein belongs to the HypA/HybF family.

Involved in the maturation of [NiFe] hydrogenases. Required for nickel insertion into the metal center of the hydrogenase. The polypeptide is Hydrogenase maturation factor HypA (Pelodictyon phaeoclathratiforme (strain DSM 5477 / BU-1)).